Reading from the N-terminus, the 294-residue chain is Elongation factor Ts (294 aa).

Positions 82 to 85 (TDFV) are involved in Mg(2+) ion dislocation from EF-Tu.

It belongs to the EF-Ts family.

It localises to the cytoplasm. Its function is as follows. Associates with the EF-Tu.GDP complex and induces the exchange of GDP to GTP. It remains bound to the aminoacyl-tRNA.EF-Tu.GTP complex up to the GTP hydrolysis stage on the ribosome. This Psychrobacter cryohalolentis (strain ATCC BAA-1226 / DSM 17306 / VKM B-2378 / K5) protein is Elongation factor Ts.